The following is a 329-amino-acid chain: Glutamine synthetase (329 aa).

The region spanning 4 to 86 (YKLEYIWLDA…VMCEVMMPDA (83 aa)) is the GS beta-grasp domain. A GS catalytic domain is found at 89-329 (PHASNTRATV…GDPYQMLLSS (241 aa)). Mg(2+) is bound by residues glutamate 109 and glutamate 111. Glutamate 167 provides a ligand contact to ATP. 2 residues coordinate Mg(2+): glutamate 172 and glutamate 179. Glutamate 278 contacts L-glutamate.

It belongs to the glutamine synthetase family. As to quaternary structure, homooctamer and homotetramer. Requires Mg(2+) as cofactor.

The protein localises to the cytoplasm. The enzyme catalyses L-glutamate + NH4(+) + ATP = L-glutamine + ADP + phosphate + H(+). In terms of biological role, catalyzes the ATP-dependent biosynthesis of glutamine from glutamate and ammonia. This is Glutamine synthetase from Rhizobium meliloti (Ensifer meliloti).